A 445-amino-acid polypeptide reads, in one-letter code: Proline--tRNA ligase (445 aa).

This sequence belongs to the class-II aminoacyl-tRNA synthetase family. ProS type 2 subfamily. Homodimer.

It is found in the cytoplasm. The enzyme catalyses tRNA(Pro) + L-proline + ATP = L-prolyl-tRNA(Pro) + AMP + diphosphate. Its function is as follows. Catalyzes the attachment of proline to tRNA(Pro) in a two-step reaction: proline is first activated by ATP to form Pro-AMP and then transferred to the acceptor end of tRNA(Pro). The polypeptide is Proline--tRNA ligase (Cereibacter sphaeroides (strain ATCC 17029 / ATH 2.4.9) (Rhodobacter sphaeroides)).